A 198-amino-acid polypeptide reads, in one-letter code: Nucleoid occlusion factor SlmA (198 aa).

Residues 9-70 enclose the HTH tetR-type domain; the sequence is RNRREEILQA…SLIEFIEDSL (62 aa). A DNA-binding region (H-T-H motif) is located at residues 33-52; sequence TTAKLAANVGVSEAALYRHF. The stretch at 119–144 forms a coiled coil; sequence DRLQGRINQLFERIEVQLRQVLREKK.

The protein belongs to the nucleoid occlusion factor SlmA family. As to quaternary structure, homodimer. Interacts with FtsZ.

The protein resides in the cytoplasm. Its subcellular location is the nucleoid. Functionally, required for nucleoid occlusion (NO) phenomenon, which prevents Z-ring formation and cell division over the nucleoid. Acts as a DNA-associated cell division inhibitor that binds simultaneously chromosomal DNA and FtsZ, and disrupts the assembly of FtsZ polymers. SlmA-DNA-binding sequences (SBS) are dispersed on non-Ter regions of the chromosome, preventing FtsZ polymerization at these regions. This is Nucleoid occlusion factor SlmA from Yersinia enterocolitica serotype O:8 / biotype 1B (strain NCTC 13174 / 8081).